We begin with the raw amino-acid sequence, 336 residues long: Foldase protein PrsA (336 aa).

The first 22 residues, 1–22, serve as a signal peptide directing secretion; the sequence is MKSAKKLLSVLCLGIFILTFTA. Residue Cys23 is the site of N-palmitoyl cysteine attachment. A lipid anchor (S-diacylglycerol cysteine) is attached at Cys23. The PpiC domain occupies 194–286; that stretch reads PNTMNVSHIL…WGYHIIKINS (93 aa).

This sequence belongs to the PrsA family.

The protein resides in the cell membrane. The catalysed reaction is [protein]-peptidylproline (omega=180) = [protein]-peptidylproline (omega=0). Functionally, plays a major role in protein secretion by helping the post-translocational extracellular folding of several secreted proteins. The chain is Foldase protein PrsA from Clostridium botulinum (strain Langeland / NCTC 10281 / Type F).